The sequence spans 579 residues: Isocitrate dehydrogenase kinase/phosphatase (579 aa).

Residues 324-330 (ADGTPGM) and Lys345 each bind ATP. Asp380 is a catalytic residue.

It belongs to the AceK family.

It is found in the cytoplasm. The catalysed reaction is L-seryl-[isocitrate dehydrogenase] + ATP = O-phospho-L-seryl-[isocitrate dehydrogenase] + ADP + H(+). Functionally, bifunctional enzyme which can phosphorylate or dephosphorylate isocitrate dehydrogenase (IDH) on a specific serine residue. This is a regulatory mechanism which enables bacteria to bypass the Krebs cycle via the glyoxylate shunt in response to the source of carbon. When bacteria are grown on glucose, IDH is fully active and unphosphorylated, but when grown on acetate or ethanol, the activity of IDH declines drastically concomitant with its phosphorylation. The polypeptide is Isocitrate dehydrogenase kinase/phosphatase (Xanthomonas campestris pv. campestris (strain 8004)).